The following is a 758-amino-acid chain: Polyribonucleotide nucleotidyltransferase (758 aa).

Positions 482 and 488 each coordinate Mg(2+). The region spanning 549 to 608 is the KH domain; sequence PRVLSFYIDKDKISAAIGTKGKNIRSVCERSNAKIEIGDDGKVSVFAISSTEAEAAKNMM. The 69-residue stretch at 618–686 folds into the S1 motif domain; sequence GSIIDAKVVK…KGGCPKLSRR (69 aa). The interval 707–758 is disordered; it reads DGLNNRDNYYNNSFNKKPEDNYHSNRPTRPRSGFSNRSRPKFGNNDSSSGFY. The segment covering 711–721 has biased composition (low complexity); that stretch reads NRDNYYNNSFN.

The protein belongs to the polyribonucleotide nucleotidyltransferase family. It depends on Mg(2+) as a cofactor.

Its subcellular location is the cytoplasm. It carries out the reaction RNA(n+1) + phosphate = RNA(n) + a ribonucleoside 5'-diphosphate. Involved in mRNA degradation. Catalyzes the phosphorolysis of single-stranded polyribonucleotides processively in the 3'- to 5'-direction. The protein is Polyribonucleotide nucleotidyltransferase of Wolbachia pipientis subsp. Culex pipiens (strain wPip).